The chain runs to 63 residues: Large ribosomal subunit protein uL29 (63 aa).

This sequence belongs to the universal ribosomal protein uL29 family.

The polypeptide is Large ribosomal subunit protein uL29 (Haemophilus ducreyi (strain 35000HP / ATCC 700724)).